Here is a 304-residue protein sequence, read N- to C-terminus: Non-specific ribonucleoside hydrolase RihC (304 aa).

His-233 is a catalytic residue.

It belongs to the IUNH family. RihC subfamily.

Hydrolyzes both purine and pyrimidine ribonucleosides with a broad-substrate specificity. The protein is Non-specific ribonucleoside hydrolase RihC of Escherichia coli O8 (strain IAI1).